A 264-amino-acid polypeptide reads, in one-letter code: Transmembrane protein 41A (264 aa).

The signal sequence occupies residues 1 to 17 (MRPLLGLLLVFAGCTFA). 5 helical membrane passes run 67–87 (AYVF…AIPG), 100–122 (GPWL…CYLL), 153–173 (LFFF…FLNL), 175–195 (APIL…GLIP), and 219–239 (WDTV…GTLI). Residues 96–207 (GALFGPWLGL…FICVQTGSIL (112 aa)) form a VTT domain region. N-linked (GlcNAc...) asparagine glycosylation occurs at Asn250.

Belongs to the TMEM41 family.

It localises to the membrane. This Homo sapiens (Human) protein is Transmembrane protein 41A (TMEM41A).